The chain runs to 674 residues: uncharacterized protein (674 aa).

An N-terminal signal peptide occupies residues 1–24; the sequence is MKTLKALKIFIIVYISSVSLESFA. Helical transmembrane passes span 226-246 and 254-274; these read IIGAALILYTMFFAFNMALNK and ITLFIIKFLFVVYFSIGLEPL. Residues 363 to 384 are disordered; the sequence is GNGPGGNNKPIPNFDPDSKKDR. A run of 4 helical transmembrane segments spans residues 409–429, 436–456, 469–489, and 562–582; these read IIILVAGIAFSVIFLSILLYF, CMITIYVMTYISPIFIPMVLF, VCISCALQPAVVAGFIALLIT, and VVSILAELLCVLVFSVIFYYF. Positions 624-674 are disordered; the sequence is SSVHAQGKSPVEDKPDIGSKRKDGVQQGEDSENSSGGELADLASGSGGGKL. Residues 633 to 647 are compositionally biased toward basic and acidic residues; sequence PVEDKPDIGSKRKDG.

It belongs to the TrbL/VirB6 family.

It is found in the cell membrane. This is an uncharacterized protein from Rickettsia typhi (strain ATCC VR-144 / Wilmington).